The sequence spans 350 residues: L-serine dehydratase (350 aa).

K62 is modified (N6-(pyridoxal phosphate)lysine).

It belongs to the serine/threonine dehydratase family. It depends on pyridoxal 5'-phosphate as a cofactor.

It localises to the cytoplasm. It catalyses the reaction L-serine = pyruvate + NH4(+). It participates in carbohydrate biosynthesis; gluconeogenesis. The polypeptide is L-serine dehydratase (sds) (Dictyostelium discoideum (Social amoeba)).